Consider the following 37-residue polypeptide: Cytochrome b6-f complex subunit 5 (37 aa).

A helical transmembrane segment spans residues 5-25 (LLSGIILGLIPVTLSGLLVAA).

It belongs to the PetG family. As to quaternary structure, the 4 large subunits of the cytochrome b6-f complex are cytochrome b6, subunit IV (17 kDa polypeptide, PetD), cytochrome f and the Rieske protein, while the 4 small subunits are PetG, PetL, PetM and PetN. The complex functions as a dimer.

The protein resides in the plastid. Its subcellular location is the chloroplast thylakoid membrane. In terms of biological role, component of the cytochrome b6-f complex, which mediates electron transfer between photosystem II (PSII) and photosystem I (PSI), cyclic electron flow around PSI, and state transitions. PetG is required for either the stability or assembly of the cytochrome b6-f complex. In Porphyra purpurea (Red seaweed), this protein is Cytochrome b6-f complex subunit 5.